The sequence spans 62 residues: Sperm protamine P1 (62 aa).

Residues 1-62 form a disordered region; the sequence is MARYRRHSRS…RRYSRRRRRY (62 aa).

This sequence belongs to the protamine P1 family. In terms of tissue distribution, testis.

The protein resides in the nucleus. It is found in the chromosome. Protamines substitute for histones in the chromatin of sperm during the haploid phase of spermatogenesis. They compact sperm DNA into a highly condensed, stable and inactive complex. The polypeptide is Sperm protamine P1 (PRM1) (Sminthopsis longicaudata (Long-tailed dunnart)).